Reading from the N-terminus, the 244-residue chain is 1-(5-phosphoribosyl)-5-[(5-phosphoribosylamino)methylideneamino] imidazole-4-carboxamide isomerase (244 aa).

Asp10 acts as the Proton acceptor in catalysis. The Proton donor role is filled by Asp129.

It belongs to the HisA/HisF family.

It localises to the cytoplasm. The catalysed reaction is 1-(5-phospho-beta-D-ribosyl)-5-[(5-phospho-beta-D-ribosylamino)methylideneamino]imidazole-4-carboxamide = 5-[(5-phospho-1-deoxy-D-ribulos-1-ylimino)methylamino]-1-(5-phospho-beta-D-ribosyl)imidazole-4-carboxamide. The protein operates within amino-acid biosynthesis; L-histidine biosynthesis; L-histidine from 5-phospho-alpha-D-ribose 1-diphosphate: step 4/9. This is 1-(5-phosphoribosyl)-5-[(5-phosphoribosylamino)methylideneamino] imidazole-4-carboxamide isomerase from Rhodococcus opacus (strain B4).